Consider the following 917-residue polypeptide: Envelope glycoprotein B (917 aa).

The signal sequence occupies residues 1–22 (MAISRRSLHAIILTVLLLAATA). A compositionally biased stretch (low complexity) spans 21 to 30 (TAAPSQSGSR). A disordered region spans residues 21 to 117 (TAAPSQSGSR…SGNASEPADP (97 aa)). The Virion surface portion of the chain corresponds to 23 to 792 (APSQSGSRSR…SGVSSFLSNP (770 aa)). Over residues 38 to 49 (ERQSTNRGRDNN) the composition is skewed to basic and acidic residues. 3 N-linked (GlcNAc...) asparagine; by host glycosylation sites follow: asparagine 48, asparagine 110, and asparagine 164. 5 cysteine pairs are disulfide-bonded: cysteine 139/cysteine 591, cysteine 156/cysteine 547, cysteine 230/cysteine 294, cysteine 387/cysteine 435, and cysteine 614/cysteine 651. 2 involved in fusion and/or binding to host membrane regions span residues 196-202 (VWSGYSY) and 281-288 (GSAWIHRH). N-linked (GlcNAc...) asparagine; by host glycans are attached at residues asparagine 421, asparagine 453, and asparagine 505. An N-linked (GlcNAc...) asparagine; by host glycan is attached at asparagine 692. The tract at residues 737 to 790 (IDTVIKADPNAAIFAGLHGFFEGLGDVGRAVGRVVLGVVGGVVATVSGVSSFLS) is hydrophobic membrane proximal region. The chain crosses the membrane as a helical span at residues 793–813 (FGALAIGLLVLGGLVAAFFAF). The Intravirion segment spans residues 814 to 917 (RYVMRLQRNP…EALPETDEDI (104 aa)). A Golgi targeting motif is present at residues 865-868 (YMAL). The Internalization motif motif lies at 907 to 910 (YEAL).

Belongs to the herpesviridae glycoprotein B family. As to quaternary structure, homotrimer; disulfide-linked. Binds to heparan sulfate proteoglycans. Interacts with gH/gL heterodimer. In terms of processing, a proteolytic cleavage by host furin generates two subunits that remain linked by disulfide bonds.

The protein resides in the virion membrane. It is found in the host cell membrane. It localises to the host endosome membrane. The protein localises to the host Golgi apparatus membrane. Its function is as follows. Envelope glycoprotein that forms spikes at the surface of virion envelope. Essential for the initial attachment to heparan sulfate moieties of the host cell surface proteoglycans. Involved in fusion of viral and cellular membranes leading to virus entry into the host cell. Following initial binding to its host receptors, membrane fusion is mediated by the fusion machinery composed at least of gB and the heterodimer gH/gL. May be involved in the fusion between the virion envelope and the outer nuclear membrane during virion egress. The protein is Envelope glycoprotein B of Bovine herpesvirus 2 (strain BMV) (BoHV-2).